Here is a 194-residue protein sequence, read N- to C-terminus: Fibroblast growth factor 7 (194 aa).

Positions 1–31 (MRKWILTRILPTPLYRPCFHLVCLVGTISLA) are cleaved as a signal peptide. N45 and N149 each carry an N-linked (GlcNAc...) asparagine glycan.

It belongs to the heparin-binding growth factors family. In terms of assembly, interacts with FGFBP1. Interacts with FGFR2. Affinity between fibroblast growth factors (FGFs) and their receptors is increased by heparan sulfate glycosaminoglycans that function as coreceptors.

Its function is as follows. Growth factor active on keratinocytes. Possible major paracrine effector of normal epithelial cell proliferation. The protein is Fibroblast growth factor 7 (Fgf7) of Rattus norvegicus (Rat).